The sequence spans 677 residues: DNA ligase (677 aa).

Residues 34-38, 83-84, and Glu115 contribute to the NAD(+) site; these read DLAFD and SL. Lys117 serves as the catalytic N6-AMP-lysine intermediate. NAD(+)-binding residues include Arg138, Glu180, Lys297, and Lys321. Zn(2+) is bound by residues Cys416, Cys419, Cys434, and Cys439. The region spanning 596–677 is the BRCT domain; that stretch reads KKTSQLAGLT…LIKMLETEQA (82 aa).

The protein belongs to the NAD-dependent DNA ligase family. LigA subfamily. Mg(2+) is required as a cofactor. Mn(2+) serves as cofactor.

The enzyme catalyses NAD(+) + (deoxyribonucleotide)n-3'-hydroxyl + 5'-phospho-(deoxyribonucleotide)m = (deoxyribonucleotide)n+m + AMP + beta-nicotinamide D-nucleotide.. DNA ligase that catalyzes the formation of phosphodiester linkages between 5'-phosphoryl and 3'-hydroxyl groups in double-stranded DNA using NAD as a coenzyme and as the energy source for the reaction. It is essential for DNA replication and repair of damaged DNA. In Acidobacterium capsulatum (strain ATCC 51196 / DSM 11244 / BCRC 80197 / JCM 7670 / NBRC 15755 / NCIMB 13165 / 161), this protein is DNA ligase.